The chain runs to 498 residues: Guanosine-5'-triphosphate,3'-diphosphate pyrophosphatase (498 aa).

The protein belongs to the GppA/Ppx family. GppA subfamily.

The enzyme catalyses guanosine 3'-diphosphate 5'-triphosphate + H2O = guanosine 3',5'-bis(diphosphate) + phosphate + H(+). The protein operates within purine metabolism; ppGpp biosynthesis; ppGpp from GTP: step 2/2. In terms of biological role, catalyzes the conversion of pppGpp to ppGpp. Guanosine pentaphosphate (pppGpp) is a cytoplasmic signaling molecule which together with ppGpp controls the 'stringent response', an adaptive process that allows bacteria to respond to amino acid starvation, resulting in the coordinated regulation of numerous cellular activities. The protein is Guanosine-5'-triphosphate,3'-diphosphate pyrophosphatase of Pectobacterium carotovorum subsp. carotovorum (strain PC1).